A 490-amino-acid chain; its full sequence is 5'-3' exonuclease PLD3 (490 aa).

At 1–38 (MKPKLMYQELKVPAEEPANELPMNEIEAWKAAEKKARW) the chain is on the cytoplasmic side. Residues 39-59 (VLLVLILAVVGFGALMTQLFL) traverse the membrane as a helical; Signal-anchor for type II membrane protein segment. Residues 60 to 490 (WEYGDLHLFG…DSVGNACRLL (431 aa)) are Lumenal-facing. 2 cysteine pairs are disulfide-bonded: Cys77-Cys239 and Cys81-Cys237. Residues Asn97 and Asn132 are each glycosylated (N-linked (GlcNAc...) asparagine). The region spanning 196-223 (THGVLHTKFWVVDQTHFYLGSANMDWRS) is the PLD phosphodiesterase 1 domain. Catalysis depends on residues His201, Lys203, and Asp208. The active-site Proton donor is the His201. Phosphate is bound by residues His201 and Lys203. Position 218 (Asn218) interacts with phosphate. Asn236, Asn284, and Asn387 each carry an N-linked (GlcNAc...) asparagine glycan. Cysteines 366 and 487 form a disulfide. Residues 411–437 (YARVNHNKYMVTERATYIGTSNWSGNY) enclose the PLD phosphodiesterase 2 domain. Position 416 (His416) interacts with phosphate. His416 serves as the catalytic Nucleophile. Mg(2+) is bound at residue Phe438.

This sequence belongs to the phospholipase D family. As to quaternary structure, homodimer. Interacts with APP. Post-translationally, N-glycosylated. Proteolytically processed to a soluble active form that is stable within endosomes and lysosomes. During transport through the secretory pathway becomes proteolysed by cysteine proteases, thereby releasing a stable soluble lysosomal lumenal polypeptide, whereas the transmembrane-bound fragment is rapidly degraded. Its transport route to lysosomes involves ubiquitination and the ESCRT complex. In terms of processing, ubiquitinated at N-terminus. Ubiquitination mediates sorting into lysosomes. In terms of tissue distribution, widely expressed. In the brain, high levels of expression are detected in the frontal, temporal and occipital cortices and hippocampus. Expressed at low level in corpus callosum. Expressed in plasmacytoid dendritic cells and monocytes (at protein level).

The protein localises to the endoplasmic reticulum membrane. The protein resides in the lysosome lumen. Its subcellular location is the early endosome membrane. It is found in the late endosome membrane. It localises to the golgi apparatus membrane. The protein localises to the endosome membrane. The catalysed reaction is Exonucleolytic cleavage in the 5'- to 3'-direction to yield nucleoside 3'-phosphates.. It carries out the reaction a 5'-end 5'-dephospho-ribonucleotidyl-ribonucleotide-RNA + H2O = a ribonucleoside 3'-phosphate + a 5'-end dephospho-ribonucleoside-RNA + H(+). It catalyses the reaction a ribonucleoside 3'-phosphate-2'-3'-cyclophospho-GMP + H2O = a ribonucleoside 3'-phosphate + 2',3'-cyclophospho-GMP + H(+). The enzyme catalyses a 5'-end 5'-dephospho-2'-deoxyribonucleotidyl-2'-deoxyribonucleotide in single-stranded DNA + H2O = a 5'-end dephospho-2'-deoxyribonucleoside in single-stranded DNA + a 2'-deoxyribonucleoside 3'-phosphate + H(+). The catalysed reaction is a 5'-end 5'-phospho-2'-deoxyribonucleotide in single-stranded DNA + H2O = a 5'-end 5'-dephospho-2'-deoxyribonucleotide in single-stranded DNA + phosphate. It carries out the reaction a 3-lyso-sn-glycero-1-phospho-(3'-acyl-1'-sn-glycerol) + a 1-acyl-sn-glycerol = a 3-acyl-sn-glycero-1-phospho-(3'-acyl-1'-sn-glycerol) + glycerol. It catalyses the reaction 3-lyso-sn-glycero-1-phospho-(3'-(9Z-octadecenoyl)-1'-sn-glycerol) + 1-(9Z-octadecenoyl)-sn-glycerol = 3-(9Z-octadecenoyl)-sn-glycero-1-phospho-(3'-(9Z-octadecenoyl)-1'-sn-glycerol) + glycerol. With respect to regulation, the exonuclease activity toward ssDNA substrate is Ca(2+) and Mg(2+)-independent, but it is inhibited by Fe(2+), Cu(2+) and to a lesser extent Zn(2+) ions. Its function is as follows. 5'-&gt;3' exonuclease that hydrolyzes the phosphodiester bond of single-stranded DNA (ssDNA) and RNA molecules to form nucleoside 3'-monophosphates and 5'-end 5'-hydroxy deoxyribonucleotide/ribonucleotide fragments. Partially redundant with PLD4, can cleave all four nucleotides displaying higher efficiency for ssDNA and RNA fragments initiated with uridine and guanosine residues and lower efficiency for cytidine-initiated substrates. As a result, it does not always degrade polynucleotides to the single nucleotide level, it can stall at specific sites sparing certain fragments from exonucleolytic degradation. Processes self and pathogenic ssDNA and RNA molecules that reach the endolysosomal compartment via phagocytosis or autophagy and may serve as 'danger' signals for recognition by innate immune receptors such as toll-like receptors (TLRs). Degrades mitochondrial CpG-rich ssDNA fragments to prevent TLR9 activation and autoinflammatory response, but it can cleave viral RNA to generate ligands for TLR7 activation and initiate antiviral immune responses. In plasmacytoid dendritic cells, it cooperates with endonuclease RNASET2 to release 2',3'-cyclic guanosine monophosphate (2',3'-cGMP), a potent stimulatory ligand for TLR7. Produces 2',3'-cGMPs and cytidine-rich RNA fragments that occupy TLR7 ligand-binding pockets and trigger a signaling-competent state. Can exert polynucleotide phosphatase activity toward 5'-phosphorylated ssDNA substrates although at a slow rate. Transphosphatidylase that catalyzes the exchange with R to S stereo-inversion of the glycerol moiety between (S,R)-lysophosphatidylglycerol (LPG) and monoacylglycerol (MAG) substrates to yield (S,S)-bis(monoacylglycero)phosphate (BMP). Can synthesize a variety of (S,S)-BMPs representing the main phospholipid constituent of lysosomal intralumenal vesicle (ILV) membranes that bind acid hydrolases for lipid degradation. Regulates the homeostasis and interorganellar communication of the endolysosomal system with an overall impact on cellular removal of dysfunctional organelles via autophagy as well as proper protein and lipid turnover. May play a role in myotube formation in response to ER stress. This is 5'-3' exonuclease PLD3 from Homo sapiens (Human).